Reading from the N-terminus, the 327-residue chain is AA9 family lytic polysaccharide monooxygenase G (327 aa).

An N-terminal signal peptide occupies residues 1–20 (MKLNLASLCFLASIAPLVSG). Cu(2+)-binding residues include H21 and H96. Residues C62 and C185 are joined by a disulfide bond. H172 lines the O2 pocket. A Cu(2+)-binding site is contributed by Y182. An N-linked (GlcNAc...) asparagine glycan is attached at N290. In terms of domain architecture, CBM1 spans 291 to 327 (GTIKKYYQCGGQGWTGSGSCEAGTSCREWNTWYFQCV).

This sequence belongs to the polysaccharide monooxygenase AA9 family. The cofactor is Cu(2+).

It is found in the secreted. The enzyme catalyses [(1-&gt;4)-beta-D-glucosyl]n+m + reduced acceptor + O2 = 4-dehydro-beta-D-glucosyl-[(1-&gt;4)-beta-D-glucosyl]n-1 + [(1-&gt;4)-beta-D-glucosyl]m + acceptor + H2O.. In terms of biological role, lytic polysaccharide monooxygenase (LPMO) that depolymerizes crystalline and amorphous polysaccharides via the oxidation of scissile alpha- or beta-(1-4)-glycosidic bonds, yielding C1 or C4 oxidation products. Catalysis by LPMOs requires the reduction of the active-site copper from Cu(II) to Cu(I) by a reducing agent and H(2)O(2) or O(2) as a cosubstrate. The protein is AA9 family lytic polysaccharide monooxygenase G of Aspergillus tamarii.